The following is a 91-amino-acid chain: Small ribosomal subunit protein uS15 (91 aa).

It belongs to the universal ribosomal protein uS15 family. As to quaternary structure, part of the 30S ribosomal subunit. Forms a bridge to the 50S subunit in the 70S ribosome, contacting the 23S rRNA.

In terms of biological role, one of the primary rRNA binding proteins, it binds directly to 16S rRNA where it helps nucleate assembly of the platform of the 30S subunit by binding and bridging several RNA helices of the 16S rRNA. Its function is as follows. Forms an intersubunit bridge (bridge B4) with the 23S rRNA of the 50S subunit in the ribosome. This is Small ribosomal subunit protein uS15 from Synechococcus sp. (strain JA-2-3B'a(2-13)) (Cyanobacteria bacterium Yellowstone B-Prime).